The chain runs to 488 residues: Inosine-5'-monophosphate dehydrogenase (488 aa).

CBS domains follow at residues 95 to 153 (VISN…SIKI) and 157 to 216 (MTKE…AKDE). NAD(+)-binding positions include Asp-250 and 300–302 (GIG). 2 residues coordinate K(+): Gly-302 and Gly-304. Residue Ser-305 coordinates IMP. Cys-307 contributes to the K(+) binding site. The Thioimidate intermediate role is filled by Cys-307. IMP is bound by residues 340-342 (DGG), 363-364 (GS), and 387-391 (YRGMG). Arg-403 (proton acceptor) is an active-site residue. Residue Glu-417 coordinates IMP. The tract at residues 467-488 (AGLAESHPHDVQITKESPNYSF) is disordered. 3 residues coordinate K(+): Glu-471, Ser-472, and His-473.

The protein belongs to the IMPDH/GMPR family. In terms of assembly, homotetramer. K(+) is required as a cofactor.

It carries out the reaction IMP + NAD(+) + H2O = XMP + NADH + H(+). Its pathway is purine metabolism; XMP biosynthesis via de novo pathway; XMP from IMP: step 1/1. With respect to regulation, mycophenolic acid (MPA) is a non-competitive inhibitor that prevents formation of the closed enzyme conformation by binding to the same site as the amobile flap. In contrast, mizoribine monophosphate (MZP) is a competitive inhibitor that induces the closed conformation. MPA is a potent inhibitor of mammalian IMPDHs but a poor inhibitor of the bacterial enzymes. MZP is a more potent inhibitor of bacterial IMPDH. Functionally, catalyzes the conversion of inosine 5'-phosphate (IMP) to xanthosine 5'-phosphate (XMP), the first committed and rate-limiting step in the de novo synthesis of guanine nucleotides, and therefore plays an important role in the regulation of cell growth. In Staphylococcus saprophyticus subsp. saprophyticus (strain ATCC 15305 / DSM 20229 / NCIMB 8711 / NCTC 7292 / S-41), this protein is Inosine-5'-monophosphate dehydrogenase.